The following is a 137-amino-acid chain: Peptide methionine sulfoxide reductase MsrB (137 aa).

Positions 9 to 131 constitute a MsrB domain; it reads DAEWRAMLDD…NSASLRFDAT (123 aa). Cys48, Cys51, Cys97, and Cys100 together coordinate Zn(2+). Cys120 acts as the Nucleophile in catalysis.

Belongs to the MsrB Met sulfoxide reductase family. Zn(2+) serves as cofactor.

The enzyme catalyses L-methionyl-[protein] + [thioredoxin]-disulfide + H2O = L-methionyl-(R)-S-oxide-[protein] + [thioredoxin]-dithiol. This Herminiimonas arsenicoxydans protein is Peptide methionine sulfoxide reductase MsrB.